Here is a 107-residue protein sequence, read N- to C-terminus: uncharacterized protein (107 aa).

Residues 13–68 (LQEEFLEPLSLKISDLAQILDVHRNTASNIVNNSSRITLEMAVKLAKVFDTTPEFW) form the HTH cro/C1-type domain. Positions 24 to 43 (KISDLAQILDVHRNTASNIV) form a DNA-binding region, H-T-H motif.

The protein belongs to the VapA/VapI family.

This is an uncharacterized protein from Haemophilus influenzae (strain ATCC 51907 / DSM 11121 / KW20 / Rd).